The sequence spans 163 residues: uncharacterized protein (163 aa).

This is an uncharacterized protein from Homo sapiens (Human).